A 559-amino-acid polypeptide reads, in one-letter code: Dihydroxy-acid dehydratase (559 aa).

Position 49 (C49) interacts with [2Fe-2S] cluster. D81 serves as a coordination point for Mg(2+). C122 contacts [2Fe-2S] cluster. Residues D123 and K124 each contribute to the Mg(2+) site. N6-carboxylysine is present on K124. Position 194 (C194) interacts with [2Fe-2S] cluster. E446 is a Mg(2+) binding site. S472 functions as the Proton acceptor in the catalytic mechanism.

This sequence belongs to the IlvD/Edd family. Homodimer. [2Fe-2S] cluster serves as cofactor. Mg(2+) is required as a cofactor.

The catalysed reaction is (2R)-2,3-dihydroxy-3-methylbutanoate = 3-methyl-2-oxobutanoate + H2O. It catalyses the reaction (2R,3R)-2,3-dihydroxy-3-methylpentanoate = (S)-3-methyl-2-oxopentanoate + H2O. It participates in amino-acid biosynthesis; L-isoleucine biosynthesis; L-isoleucine from 2-oxobutanoate: step 3/4. The protein operates within amino-acid biosynthesis; L-valine biosynthesis; L-valine from pyruvate: step 3/4. Functionally, functions in the biosynthesis of branched-chain amino acids. Catalyzes the dehydration of (2R,3R)-2,3-dihydroxy-3-methylpentanoate (2,3-dihydroxy-3-methylvalerate) into 2-oxo-3-methylpentanoate (2-oxo-3-methylvalerate) and of (2R)-2,3-dihydroxy-3-methylbutanoate (2,3-dihydroxyisovalerate) into 2-oxo-3-methylbutanoate (2-oxoisovalerate), the penultimate precursor to L-isoleucine and L-valine, respectively. This is Dihydroxy-acid dehydratase from Prochlorococcus marinus subsp. pastoris (strain CCMP1986 / NIES-2087 / MED4).